Reading from the N-terminus, the 353-residue chain is UPF0283 membrane protein YcjF (353 aa).

At 1-69 (MTEPLKPRID…LRPKRSLWRK (69 aa)) the chain is on the periplasmic side. A helical transmembrane segment spans residues 70-90 (MVMGGLALFGASVVGQGVQWT). Residues 91–99 (MNAWQTQDW) are Cytoplasmic-facing. A helical membrane pass occupies residues 100–120 (VALGGCAAGALIIGAGVGSVV). The Periplasmic portion of the chain corresponds to 121–212 (TEWRRLWRLR…ARREISRSAA (92 aa)). The helical transmembrane segment at 213–233 (ESTLMIAVSPLALVDMAFIAW) threads the bilayer. Residues 234–353 (RNLRLINRIA…LQKGKTPSEK (120 aa)) lie on the Cytoplasmic side of the membrane.

Belongs to the UPF0283 family.

It localises to the cell inner membrane. This Escherichia coli O157:H7 protein is UPF0283 membrane protein YcjF (ycjF).